Here is a 682-residue protein sequence, read N- to C-terminus: Actin-binding LIM protein 3 (682 aa).

Met-1 bears the N-acetylmethionine mark. 4 LIM zinc-binding domains span residues 21 to 80 (IQCY…LYGT), 80 to 140 (TRCD…MTSS), 149 to 208 (SHCA…QFGI), and 208 to 268 (IKCE…ARAE). Residues Ser-277, Ser-280, Ser-282, Ser-286, Ser-290, Ser-337, Ser-372, and Ser-373 each carry the phosphoserine modification. Disordered regions lie at residues 372–426 (SSPG…SYQA) and 440–475 (YRKP…PAYS). Tyr-376 bears the Phosphotyrosine mark. Phosphoserine occurs at positions 379 and 388. Composition is skewed to polar residues over residues 380-393 (PTYS…TFSR), 405-425 (GRSS…TSYQ), and 453-466 (STAT…DISQ). 3 positions are modified to phosphoserine: Ser-492, Ser-502, and Ser-503. Position 542 is a phosphothreonine (Thr-542). Phosphoserine is present on residues Ser-566, Ser-575, and Ser-606. In terms of domain architecture, HP spans 614–682 (MREYKIYPYE…NELKKQARLF (69 aa)). Arg-630 bears the Omega-N-methylarginine mark.

As to quaternary structure, directly interacts with F-actin and ABRA. In terms of tissue distribution, expressed in heart, brain, lung and liver. In the brain, highly expressed in the olfactory bulb. In the hippocampus, expressed selectively in the CA2 and CA3 fields. In the cerebellum, expressed in internal granular cells.

The protein localises to the cytoplasm. Its function is as follows. May act as scaffold protein. May stimulate ABRA activity and ABRA-dependent SRF transcriptional activity. The sequence is that of Actin-binding LIM protein 3 (Ablim3) from Mus musculus (Mouse).